A 457-amino-acid polypeptide reads, in one-letter code: Choline kinase alpha (457 aa).

The segment at 1-86 is disordered; that stretch reads MKTKFCTGGE…PPADEQPEPR (86 aa). Residues 13-32 are compositionally biased toward low complexity; it reads PSPLGLLLSCGSGSAAPAPG. Residues 55–80 show a composition bias toward pro residues; the sequence is LALPPPPPLPLPLPLPQPPPPQPPAD. Residues 117–123, R146, and 207–213 each bind ATP; these read RGGLSNM and QFIPSRR. Phosphocholine is bound at residue 119–121; the sequence is GLS. At K247 the chain carries N6-acetyllysine. Phosphoserine is present on S279. ATP is bound by residues Q308 and D330.

Belongs to the choline/ethanolamine kinase family. As to quaternary structure, homodimer. Heterodimer with CHKB. Monomer; acetylation by KAT5 promotes dissociation of the homodimer and monomerization. In terms of assembly, (Microbial infection) Interacts with PI4KA/PI4KIIIalpha; CHKA bridges PI4KA/PI4KIIIalpha and hepatitis C virus (HCV) non-structural protein 5A (NS5A) and potentiates NS5A-stimulated PI4KA activity, which then facilitates the targeting of the ternary complex to the ER for viral replication. Post-translationally, phosphorylated at Ser-279 by AMPK in response to glucose deprivation, leading to localization to lipid droplets. In terms of processing, acetylated by KAT5 at Lys-247 following phosphorylation by AMPK, leading to monomerization and conversion into a tyrosine-protein kinase.

The protein resides in the cytoplasm. It localises to the cytosol. Its subcellular location is the lipid droplet. The catalysed reaction is choline + ATP = phosphocholine + ADP + H(+). It carries out the reaction ethanolamine + ATP = phosphoethanolamine + ADP + H(+). It catalyses the reaction L-tyrosyl-[protein] + ATP = O-phospho-L-tyrosyl-[protein] + ADP + H(+). It functions in the pathway phospholipid metabolism; phosphatidylcholine biosynthesis; phosphocholine from choline: step 1/1. It participates in phospholipid metabolism; phosphatidylethanolamine biosynthesis; phosphatidylethanolamine from ethanolamine: step 1/3. Its activity is regulated as follows. Homodimerization or heterodimerization is required for the choline and ethanolamine kinase activities. In terms of biological role, plays a key role in phospholipid biosynthesis by catalyzing the phosphorylation of free choline to phosphocholine, the first step in phosphatidylcholine biosynthesis. Also phosphorylates ethanolamine, thereby contributing to phosphatidylethanolamine biosynthesis. Has higher activity with choline. May contribute to tumor cell growth. Functionally, this isoform plays a key role in lipolysis of lipid droplets following glucose deprivation. In response to glucose deprivation, phosphorylated by AMPK, promoting localization to lipid droplets. Phosphorylation is followed by acetylation by KAT5, leading to dissociation of the homodimer into a monomer. Monomeric CHKA isoform 1 is converted into a tyrosine-protein kinase, which phosphorylates lipid droplet structural proteins PLIN2 and PLIN3, leading to lipolysis of lipid droplets. This is Choline kinase alpha (CHKA) from Homo sapiens (Human).